We begin with the raw amino-acid sequence, 353 residues long: Ribosomal RNA small subunit methyltransferase H (353 aa).

S-adenosyl-L-methionine contacts are provided by residues 39 to 41, aspartate 58, phenylalanine 90, aspartate 108, and glutamine 115; that span reads AGH. Positions 334-353 are disordered; sequence SEDGVRGAHGHRRRTQARRG. Residues 341–353 are compositionally biased toward basic residues; that stretch reads AHGHRRRTQARRG.

Belongs to the methyltransferase superfamily. RsmH family.

Its subcellular location is the cytoplasm. The catalysed reaction is cytidine(1402) in 16S rRNA + S-adenosyl-L-methionine = N(4)-methylcytidine(1402) in 16S rRNA + S-adenosyl-L-homocysteine + H(+). In terms of biological role, specifically methylates the N4 position of cytidine in position 1402 (C1402) of 16S rRNA. The chain is Ribosomal RNA small subunit methyltransferase H from Bifidobacterium animalis subsp. lactis (strain AD011).